Here is a 633-residue protein sequence, read N- to C-terminus: MTHNFAENYDIIVVGAGHAGVEASLAASRMGCKTLLATINLEMLAFMPCNPSIGGSAKGIVVREIDALGGEMGKNIDKTYIQMKMLNTGKGPAVRALRAQADKALYAQTMKQTVEKQENLTLRQAMIDEILVEDGKVVGVRTATNQKFSAKSVVITTGTALRGEIILGELKYSSGPNNSLASVTLADNLRDLGLEIGRFKTGTPPRVKASSINYEKTEIQPGDEQPNHFSFMSRDEDYITDQVPCWLTYTNTLSHDIINQNLHRAPMFSGIVKGVGPRYCPSIEDKIVRFADKERHQLFLEPEGRHTEEVYVQGLSTSLPEDVQVDLLRSIKGLENAEMMRTGYAIEYDIVLPHQLRATLETKVIAGLFTAGQTNGTSGYEEAAGQGLVAGINAALKVQGKPELILKRSDAYIGVMIDDLVTKGTLEPYRLLTSRAEYRLILRHDNADMRLTEIGYEIGLVDEERYAIFKKRQMQFENELERLDSIKLKPVSETNKRIQELGFKPLTDALTAKEFMRRPQITYAVATDFVGCADEPLDSKVIELLETEIKYEGYIKKALDQVAKMKRMEEKRIPPHIDWDDIDSIATEARQKFKKINPETLGQASRISGVNPADISILMVYLEGRQKGRKNIN.

FAD is bound by residues 15-20, isoleucine 127, and serine 182; that span reads GAGHAG. 276–290 provides a ligand contact to NAD(+); the sequence is GPRYCPSIEDKIVRF. Glutamine 373 lines the FAD pocket.

The protein belongs to the MnmG family. Homodimer. Heterotetramer of two MnmE and two MnmG subunits. FAD is required as a cofactor.

It localises to the cytoplasm. Functionally, NAD-binding protein involved in the addition of a carboxymethylaminomethyl (cmnm) group at the wobble position (U34) of certain tRNAs, forming tRNA-cmnm(5)s(2)U34. This chain is tRNA uridine 5-carboxymethylaminomethyl modification enzyme MnmG, found in Streptococcus agalactiae serotype Ia (strain ATCC 27591 / A909 / CDC SS700).